Here is a 148-residue protein sequence, read N- to C-terminus: uncharacterized protein (148 aa).

3 consecutive transmembrane segments (helical) span residues 25-45 (FCTVGVGNTLIDFGVFFLLTA), 85-105 (IVRFLMINIAASGITFLLLYL), and 118-138 (LAATIGGMMMNFIGNRIWVFG).

It belongs to the GtrA family.

The protein resides in the cell membrane. This is an uncharacterized protein from Bacillus subtilis (strain 168).